An 87-amino-acid polypeptide reads, in one-letter code: Putative defensin-like protein 238 (87 aa).

An N-terminal signal peptide occupies residues 1–23 (MRSITWFIVFCVFMFIALNHVKG). 4 disulfide bridges follow: Cys30/Cys87, Cys40/Cys65, Cys48/Cys78, and Cys63/Cys80.

Belongs to the DEFL family.

It is found in the secreted. This chain is Putative defensin-like protein 238 (SCRL16), found in Arabidopsis thaliana (Mouse-ear cress).